Reading from the N-terminus, the 509-residue chain is MDEDKDIDSKESGEYEDDFEKDLEWLINDKEKSNGSTIEMACKKEDDLDQVLKENETETELGQQLSDPDNSPKDEALPRRNDFISVPSIQPLDPISDSDSENSFQDSKPENQKDLEDEEDEEVRRYIMEKIIEANKLLQTQEPVNDKRERKLKFKDKLVDLEVPPLEDSDTCKALLENETNMSGKLSQLCISGDLEQESVLVSVTDGSCEENDRKILVERDGKFELMNLQDIESQGFLPPISSANSVEHESSQLPLRAPNPSVGGIKKEESEAKGHVLPISPAGEPLAQVPQLLPNPKNRPSSAANPDVTKKARRSNHRIQSAGVSPVTSTYCLSPRQKELQKQLERKREKLKREEEQRKLEEENEKKKENEMVFKAWLQKKREQVIEMRRVQRAKQIEDMSSRQVNRDPQQAFRLWLKKKHEEQMKERKTEELRKQEECLFFLRGTEGRERAFRQWLRRKQIEKIAEQQAVKERARQLRLEARRSKQLQSSLYSIPEAKAFRFTDHYN.

2 disordered regions span residues 1–122 (MDED…EDEE) and 237–369 (FLPP…EKKK). Basic and acidic residues-rich tracts occupy residues 22-33 (DLEWLINDKEKS) and 41-56 (ACKK…KENE). The segment covering 60-69 (ELGQQLSDPD) has biased composition (polar residues). Composition is skewed to basic and acidic residues over residues 70 to 82 (NSPK…RRND) and 266 to 275 (IKKEESEAKG). Polar residues predominate over residues 319–333 (RIQSAGVSPVTSTYC). Coiled coils occupy residues 335–377 (SPRQ…VFKA) and 418–488 (LKKK…RSKQ). Basic and acidic residues predominate over residues 337 to 369 (RQKELQKQLERKREKLKREEEQRKLEEENEKKK).

It belongs to the CCDC181 family. In terms of assembly, homodimer. Interacts with HOOK1. Interacts with HOOK2. Interacts with HOOK3. In terms of tissue distribution, predominantly expressed in testis. Expressed at lower level in brain, eye, trachea and lung. Barely expressed in tongue, heart, liver, kidney, spleen and muscle. Present at high level in elongating spermatids, whereas lower levels are observed in round spermatids (at protein level).

It is found in the cytoplasm. Its subcellular location is the cytoskeleton. The protein resides in the cell projection. The protein localises to the cilium. It localises to the flagellum. Functionally, microtubule-binding protein that localizes to the microtubular manchette of elongating spermatids. This Mus musculus (Mouse) protein is Coiled-coil domain-containing protein 181.